The following is a 423-amino-acid chain: G protein-activated inward rectifier potassium channel 2 (423 aa).

At 1 to 89 (MAKLTESMTN…IFTTLVDLKW (89 aa)) the chain is on the cytoplasmic side. Phosphoserine occurs at positions 16 and 23. Residues 90 to 114 (RFNLLIFVMVYTVTWLFFGMIWWLI) traverse the membrane as a helical segment. Residues 115-138 (AYIRGDMDHIEDPSWTPCVTNLNG) are Extracellular-facing. The segment at residues 139–150 (FVSAFLFSIETE) is an intramembrane region (helical; Pore-forming). Positions 151-157 (TTIGYGY) form an intramembrane region, pore-forming. Residues 152–157 (TIGYGY) carry the Selectivity filter motif. At 158–166 (RVITDKCPE) the chain is on the extracellular side. A helical transmembrane segment spans residues 167–188 (GIILLLIQSVLGSIVNAFMVGC). Residues 189-423 (MFVKISQPKK…VANLENESKV (235 aa)) are Cytoplasmic-facing. Residues 390-423 (NQHAELETEEEEKNLEEQTERNGDVANLENESKV) form a disordered region. Residues 420-423 (ESKV) carry the PDZ-binding motif.

This sequence belongs to the inward rectifier-type potassium channel (TC 1.A.2.1) family. KCNJ6 subfamily. Associates with KCNJ3/GIRK1 or KCNJ5/GRIK4 to form a G-protein-activated heteromultimer pore-forming unit. The resulting inward current is much larger. Interacts (via PDZ-binding motif) with SNX27 (via PDZ domain); the interaction is required when endocytosed to prevent degradation in lysosomes and promote recycling to the plasma membrane.

It is found in the membrane. The enzyme catalyses K(+)(in) = K(+)(out). Its activity is regulated as follows. Activated by phosphatidylinositol 4,5 biphosphate (PtdIns(4,5)P2). Its function is as follows. Inward rectifier potassium channels are characterized by a greater tendency to allow potassium to flow into the cell rather than out of it. Their voltage dependence is regulated by the concentration of extracellular potassium; as external potassium is raised, the voltage range of the channel opening shifts to more positive voltages. The inward rectification is mainly due to the blockage of outward current by internal magnesium. This potassium channel may be involved in the regulation of insulin secretion by glucose and/or neurotransmitters acting through G-protein-coupled receptors. The protein is G protein-activated inward rectifier potassium channel 2 (KCNJ6) of Pongo abelii (Sumatran orangutan).